Reading from the N-terminus, the 319-residue chain is Ferrochelatase (319 aa).

Fe cation contacts are provided by H194 and E275.

This sequence belongs to the ferrochelatase family.

The protein localises to the cytoplasm. The catalysed reaction is heme b + 2 H(+) = protoporphyrin IX + Fe(2+). Its pathway is porphyrin-containing compound metabolism; protoheme biosynthesis; protoheme from protoporphyrin-IX: step 1/1. Functionally, catalyzes the ferrous insertion into protoporphyrin IX. This is Ferrochelatase from Vibrio vulnificus (strain YJ016).